Reading from the N-terminus, the 1208-residue chain is DNA-directed RNA polymerase subunit beta (1208 aa).

It belongs to the RNA polymerase beta chain family. As to quaternary structure, the RNAP catalytic core consists of 2 alpha, 1 beta, 1 beta' and 1 omega subunit. When a sigma factor is associated with the core the holoenzyme is formed, which can initiate transcription.

It catalyses the reaction RNA(n) + a ribonucleoside 5'-triphosphate = RNA(n+1) + diphosphate. Functionally, DNA-dependent RNA polymerase catalyzes the transcription of DNA into RNA using the four ribonucleoside triphosphates as substrates. In Enterococcus faecium (Streptococcus faecium), this protein is DNA-directed RNA polymerase subunit beta.